Consider the following 216-residue polypeptide: Elongation factor Ts (216 aa).

An involved in Mg(2+) ion dislocation from EF-Tu region spans residues 80 to 83 (TDFV).

It belongs to the EF-Ts family.

It is found in the cytoplasm. Functionally, associates with the EF-Tu.GDP complex and induces the exchange of GDP to GTP. It remains bound to the aminoacyl-tRNA.EF-Tu.GTP complex up to the GTP hydrolysis stage on the ribosome. The polypeptide is Elongation factor Ts (Alkaliphilus oremlandii (strain OhILAs) (Clostridium oremlandii (strain OhILAs))).